Consider the following 419-residue polypeptide: UDP-N-acetylglucosamine 1-carboxyvinyltransferase (419 aa).

22–23 (KN) lines the phosphoenolpyruvate pocket. UDP-N-acetyl-alpha-D-glucosamine is bound at residue R95. The active-site Proton donor is C119. C119 is modified (2-(S-cysteinyl)pyruvic acid O-phosphothioketal). Residues 164-167 (KVSV), D308, and I330 each bind UDP-N-acetyl-alpha-D-glucosamine.

It belongs to the EPSP synthase family. MurA subfamily.

It localises to the cytoplasm. It carries out the reaction phosphoenolpyruvate + UDP-N-acetyl-alpha-D-glucosamine = UDP-N-acetyl-3-O-(1-carboxyvinyl)-alpha-D-glucosamine + phosphate. The protein operates within cell wall biogenesis; peptidoglycan biosynthesis. Cell wall formation. Adds enolpyruvyl to UDP-N-acetylglucosamine. This is UDP-N-acetylglucosamine 1-carboxyvinyltransferase from Rickettsia peacockii (strain Rustic).